The primary structure comprises 199 residues: Ribonuclease HI (199 aa).

Positions 1–68 (MPVVECDIQT…TAVVQPDRGG (68 aa)) are not required for RNase H activity. The region spanning 66–197 (RGGRVHAYFD…ADALANEALD (132 aa)) is the RNase H type-1 domain. Positions 69–199 (RVHAYFDGAS…ALANEALDDA (131 aa)) are as active as intact RNase H. The Mg(2+) site is built by D75, E115, D139, and D189. Positions 75, 115, 139, and 189 each coordinate Mn(2+).

This sequence belongs to the RNase H family. It depends on Mn(2+) as a cofactor. Mg(2+) is required as a cofactor. The cofactor is Co(2+). Ni(2+) serves as cofactor.

The protein resides in the cytoplasm. The catalysed reaction is Endonucleolytic cleavage to 5'-phosphomonoester.. In terms of biological role, nuclease that specifically degrades the RNA of RNA-DNA hybrids; seems to act exonucleolytically on RNA/DNA hybrids. Endonucleolytically removes RNA primers from the Okazaki fragments of lagging strand synthesis on its own. Complements the temperature-sensitive phenotype of an E.coli double rnhA/rnhB (RNase H) disruption mutant. The protein is Ribonuclease HI (rnhA) of Halobacterium salinarum (strain ATCC 700922 / JCM 11081 / NRC-1) (Halobacterium halobium).